The primary structure comprises 271 residues: Glutamate 5-kinase (271 aa).

Residue lysine 14 coordinates ATP. The substrate site is built by serine 54, aspartate 141, and asparagine 157. ATP contacts are provided by residues 177–178 (SD) and 219–225 (TGGMSSK).

This sequence belongs to the glutamate 5-kinase family.

Its subcellular location is the cytoplasm. It carries out the reaction L-glutamate + ATP = L-glutamyl 5-phosphate + ADP. It functions in the pathway amino-acid biosynthesis; L-proline biosynthesis; L-glutamate 5-semialdehyde from L-glutamate: step 1/2. Catalyzes the transfer of a phosphate group to glutamate to form L-glutamate 5-phosphate. In Enterococcus faecalis (strain ATCC 700802 / V583), this protein is Glutamate 5-kinase.